Here is a 447-residue protein sequence, read N- to C-terminus: Methylenetetrahydrofolate--tRNA-(uracil-5-)-methyltransferase TrmFO (447 aa).

9–14 (GGGLAG) lines the FAD pocket.

This sequence belongs to the MnmG family. TrmFO subfamily. FAD is required as a cofactor.

The protein resides in the cytoplasm. The enzyme catalyses uridine(54) in tRNA + (6R)-5,10-methylene-5,6,7,8-tetrahydrofolate + NADH + H(+) = 5-methyluridine(54) in tRNA + (6S)-5,6,7,8-tetrahydrofolate + NAD(+). The catalysed reaction is uridine(54) in tRNA + (6R)-5,10-methylene-5,6,7,8-tetrahydrofolate + NADPH + H(+) = 5-methyluridine(54) in tRNA + (6S)-5,6,7,8-tetrahydrofolate + NADP(+). Its function is as follows. Catalyzes the folate-dependent formation of 5-methyl-uridine at position 54 (M-5-U54) in all tRNAs. This Paramagnetospirillum magneticum (strain ATCC 700264 / AMB-1) (Magnetospirillum magneticum) protein is Methylenetetrahydrofolate--tRNA-(uracil-5-)-methyltransferase TrmFO.